We begin with the raw amino-acid sequence, 314 residues long: Nodulation protein D 1 (314 aa).

The HTH lysR-type domain occupies 6 to 63; it reads LDLNLLVALDALMTERNLTAAARQINLSQPAMSAAIARLRSYFRDELFTMRGRELVPT. The H-T-H motif DNA-binding region spans 23–42; the sequence is LTAAARQINLSQPAMSAAIA.

Belongs to the LysR transcriptional regulatory family.

In terms of biological role, nodD regulates the expression of the nodABCFE genes which encode other nodulation proteins. NodD is also a negative regulator of its own expression. Binds flavonoids as inducers. The polypeptide is Nodulation protein D 1 (nodD1) (Bradyrhizobium elkanii).